A 281-amino-acid chain; its full sequence is tRNA dimethylallyltransferase (281 aa).

Interaction with substrate tRNA regions lie at residues D13–Q16 and Q133–R137.

This sequence belongs to the IPP transferase family. Monomer. It depends on Mg(2+) as a cofactor.

The enzyme catalyses adenosine(37) in tRNA + dimethylallyl diphosphate = N(6)-dimethylallyladenosine(37) in tRNA + diphosphate. Functionally, catalyzes the transfer of a dimethylallyl group onto the adenine at position 37 in tRNAs that read codons beginning with uridine, leading to the formation of N6-(dimethylallyl)adenosine (i(6)A). In Novosphingobium aromaticivorans (strain ATCC 700278 / DSM 12444 / CCUG 56034 / CIP 105152 / NBRC 16084 / F199), this protein is tRNA dimethylallyltransferase.